The chain runs to 172 residues: RNA silencing suppressor p19 (172 aa).

Residues M1–D20 show a composition bias toward basic and acidic residues. The disordered stretch occupies residues M1–T27.

It belongs to the tombusvirus protein p19 family. Homodimer.

Its function is as follows. Acts as a suppressor of RNA-mediated gene silencing, also known as post-transcriptional gene silencing (PTGS), a mechanism of plant viral defense that limits the accumulation of viral RNAs. Binds to short interfering RNAs (siRNAs) with high affinity. Acts as a molecular caliper to specifically select siRNAs based on the length of the duplex region of the RNA. In Dianthus caryophyllus (Carnation), this protein is RNA silencing suppressor p19.